The chain runs to 361 residues: uncharacterized protein (361 aa).

Positions 1–10 are enriched in basic residues; the sequence is MRRYLKKAKP. Disordered stretches follow at residues 1-82 and 94-147; these read MRRY…SSFH and ALSH…VNTS. Basic and acidic residues-rich tracts occupy residues 44 to 57 and 120 to 134; these read KEKNSGKFRVKYEN and FTKKEEDSSTKESEL. Polar residues predominate over residues 135 to 147; that stretch reads QTRSSPPLPVNTS. Positions 295–349 form a coiled coil; it reads NILTMDEQIQRLKEAIASEKLQQEERSQIIKSLMEEELEINEQEEKIKHSFIDLD.

The protein resides in the cytoplasm. The protein localises to the nucleus. This is an uncharacterized protein from Schizosaccharomyces pombe (strain 972 / ATCC 24843) (Fission yeast).